We begin with the raw amino-acid sequence, 367 residues long: Endophilin-A2 (367 aa).

Positions 1-21 (MSVAGLKKQFYKASQLVSEKV) are membrane-binding amphipathic helix. Residues 18–249 (SEKVGGAEGT…LKRRMREASS (232 aa)) enclose the BAR domain. Positions 60 to 87 (PNPASRAKLTMLNTMSKIRGQVKNPGYP) are required for dimerization upon membrane association. Residues 181-250 (EELRQAMEKF…KRRMREASSR (70 aa)) adopt a coiled-coil conformation. The tract at residues 218 to 254 (LVDAQLDYHRQAVQILDELAEKLKRRMREASSRPRRE) is interaction with ARC. The segment at 243–293 (RMREASSRPRREYKPKPRETYDFGESDQSNGGFSCTPTPKVSASSSFRSDK) is disordered. A compositionally biased stretch (basic and acidic residues) spans 245 to 263 (REASSRPRREYKPKPRETY). Positions 268-289 (SDQSNGGFSCTPTPKVSASSSF) are enriched in polar residues. An SH3 domain is found at 305-364 (LDQPCCKALYDFEPENDGELGFKEGDIITLTNQIDENWYEGMINGQSGFFPLNYVEVLVP).

Belongs to the endophilin family. In terms of assembly, interacts with ARC. Interacts with SYNJ1 and DNM1. As to expression, highest level in central region of the theca of developing follicles (at protein level). Expressed at highest level in brain and testis, at high level in kidney, lung and stroma, low level in spleen and adrenal gland (at protein level). Expressed in most tissue with highest levels in small ovarian follicles, brain and testis.

It is found in the cytoplasm. Its subcellular location is the early endosome membrane. The protein resides in the cell projection. The protein localises to the podosome. Functionally, implicated in endocytosis. May recruit other proteins to membranes with high curvature. The sequence is that of Endophilin-A2 from Gallus gallus (Chicken).